The following is a 719-amino-acid chain: MLLVHIISFLLFFQLSAAKAPPSKTSLINTHERRSIYSCYVGLRKETWGFNGSAICRYEPAIQSMLYCLYEDTHEKGYSNKTLEKGFEEMRQFCYTPKFLNMTDAEFYTSLDNGTYYIQDQPKAGINITYPIRLNTTLRKAYYDAYYGYYYNHDIPYYFGGIICAYFVGVMLLAGLIRFLNYTPIKKIMFQQKLVNYVRGYTTLPTLYEKHAEPFSYLKVITGYLPTRFETLVILGYLILHTIFMAYKYQYDPYHIIFAAHRAEVAHFVAYRSGILSFAHLPLIVLFAGRNNFLQLISGLKHTSFIVFHKWLGRMMFLDAIIHAAGFTNYYLYYKKWNTVRLRVYWKFGIATTCLAGMLIFFSIAAFRRHYYETFMALHIVFAALFLYTCWEHVTNFSGIEWIYAAIAIWGVDRIVRITRIALLGFPKADLQLVGSDLVRVTVKKPKKFWKAKPGQYVFVSFLRPLCFWQSHPFTVMDSCVNDRELVIVLKAKKGVTKLVRNFVERKGGKASMRLAIEGPYGSKSTAHRFDNVLLLAGGSGLPGPISHALELGKTTAASGKNFVQLVIAVRGLDMLNACKKELMALKGLNVQVHIYNSKQELASAEKISSNEVKNGETTAEKAPSSLSNSEKAPSESENTELPLSLNDTSISDLEFATFHVGRPNVEEILNESVNHSGSLAVVCCGPPIFVDTARNQTAKAVIRNPSRMIEYLEEYQAW.

A signal peptide spans 1–18 (MLLVHIISFLLFFQLSAA). Residues 19-156 (KAPPSKTSLI…YGYYYNHDIP (138 aa)) lie on the Extracellular side of the membrane. Residues N51, N80, N101, N113, N127, and N135 are each glycosylated (N-linked (GlcNAc...) asparagine). Residues 157–177 (YYFGGIICAYFVGVMLLAGLI) traverse the membrane as a helical segment. The Cytoplasmic portion of the chain corresponds to 178–228 (RFLNYTPIKKIMFQQKLVNYVRGYTTLPTLYEKHAEPFSYLKVITGYLPTR). A helical membrane pass occupies residues 229 to 249 (FETLVILGYLILHTIFMAYKY). Topologically, residues 250–267 (QYDPYHIIFAAHRAEVAH) are extracellular. A helical transmembrane segment spans residues 268–288 (FVAYRSGILSFAHLPLIVLFA). Positions 273–407 (SGILSFAHLP…SGIEWIYAAI (135 aa)) constitute a Ferric oxidoreductase domain. The Cytoplasmic segment spans residues 289-304 (GRNNFLQLISGLKHTS). The helical transmembrane segment at 305–325 (FIVFHKWLGRMMFLDAIIHAA) threads the bilayer. The heme site is built by H309 and H323. The Extracellular portion of the chain corresponds to 326 to 346 (GFTNYYLYYKKWNTVRLRVYW). The helical transmembrane segment at 347–367 (KFGIATTCLAGMLIFFSIAAF) threads the bilayer. Topologically, residues 368-373 (RRHYYE) are cytoplasmic. A helical membrane pass occupies residues 374–394 (TFMALHIVFAALFLYTCWEHV). Residues H379 and H393 each contribute to the heme site. T395 is a topological domain (extracellular). The helical transmembrane segment at 396 to 416 (NFSGIEWIYAAIAIWGVDRIV) threads the bilayer. Positions 408-527 (AIWGVDRIVR…EGPYGSKSTA (120 aa)) constitute an FAD-binding FR-type domain. The Cytoplasmic segment spans residues 417–719 (RITRIALLGF…IEYLEEYQAW (303 aa)). 472-478 (HPFTVMD) contributes to the FAD binding site. 519–522 (GPYG) is a binding site for NADP(+). Polar residues-rich tracts occupy residues 606–618 (EKISSNEVKNGET) and 625–643 (SSLSNSEKAPSESENTELP). The segment at 606 to 643 (EKISSNEVKNGETTAEKAPSSLSNSEKAPSESENTELP) is disordered. Position 685-686 (685-686 (CG)) interacts with NADP(+).

This sequence belongs to the ferric reductase (FRE) family. FAD is required as a cofactor.

It is found in the cell membrane. It carries out the reaction 2 a Fe(II)-siderophore + NADP(+) + H(+) = 2 a Fe(III)-siderophore + NADPH. Functionally, siderophore-iron reductase responsible for reducing extracellular iron prior to import. Catalyzes the reductive uptake of Fe(3+) bound to dihydroxamate rhodotorulic acid. Fe(3+) is reduced to Fe(2+), which then dissociates from the siderophore and can be imported by the high-affinity Fe(2+) transport complex in the plasma membrane. This is Ferric reductase transmembrane component 4 (FRE4) from Saccharomyces cerevisiae (strain ATCC 204508 / S288c) (Baker's yeast).